We begin with the raw amino-acid sequence, 112 residues long: Nitrogen regulatory protein P-II 1 (112 aa).

At Y51 the chain carries O-UMP-tyrosine.

It belongs to the P(II) protein family. As to quaternary structure, homotrimer. Uridylylated/deuridylylated by GlnD.

Functionally, P-II indirectly controls the transcription of the glutamine synthetase gene (GlnA). P-II prevents NR-II-catalyzed conversion of NR-I to NR-I-phosphate, the transcriptional activator of GlnA. When P-II is uridylylated to P-II-UMP, these events are reversed. When the ratio of Gln to 2-ketoglutarate decreases, P-II is uridylylated to P-II-UMP, which causes the deadenylation of glutamine synthetase by GlnE, so activating the enzyme. This is Nitrogen regulatory protein P-II 1 (glnB) from Escherichia coli O157:H7.